We begin with the raw amino-acid sequence, 611 residues long: Pseudomonine synthase PmsE (611 aa).

One can recognise a Carrier domain in the interval 533-608 (VSVENTRTWL…SWWALVEARQ (76 aa)). Residue serine 569 is modified to O-(pantetheine 4'-phosphoryl)serine.

It belongs to the ATP-dependent AMP-binding enzyme family. The cofactor is pantetheine 4'-phosphate.

It carries out the reaction salicylate + holo-[ACP] + ATP = salicyl-[ACP] + AMP + diphosphate. It participates in siderophore biosynthesis; pseudomonine biosynthesis. Involved in the biosynthesis of the siderophore pseudomonine. Specifically adenylates salicylate and loads it onto its peptidyl carrier domain, via a thioester linkage to the phosphopanthetheine moiety. The sequence is that of Pseudomonine synthase PmsE from Pseudomonas entomophila (strain L48).